The primary structure comprises 729 residues: Solute carrier family 15 member 2 (729 aa).

Positions 1 to 34 (MNPFQQNESKETLFSPVSTEETPPRLSSPAKKTP) are disordered. The Cytoplasmic portion of the chain corresponds to 1–57 (MNPFQQNESKETLFSPVSTEETPPRLSSPAKKTPPKICGSNYPLSIAFIVVNEFCER). Ser9 bears the Phosphoserine mark. Thr12 carries the post-translational modification Phosphothreonine. Ser28 carries the phosphoserine modification. The chain crosses the membrane as a helical span at residues 58 to 78 (FSYYGMKAVLTLYFLYFLHWN). Over 79-87 (EDTSTSVYH) the chain is Extracellular. Residues 88-108 (AFSSLCYFTPILGAAIADSWL) form a helical membrane-spanning segment. The Cytoplasmic portion of the chain corresponds to 109–113 (GKFKT). A helical transmembrane segment spans residues 114 to 134 (IIYLSLVNVLGHVIKSLSAFP). Topologically, residues 135–139 (ILGGK) are extracellular. A helical transmembrane segment spans residues 140 to 160 (VVHTVLSLVGLCLIALGTGGI). At 161 to 183 (KPCVAAFGGDQFEEKHAEERTRY) the chain is on the cytoplasmic side. A helical membrane pass occupies residues 184-204 (FSGFYLAINAGSLISTFITPM). Residues 205 to 217 (LRGDVQCFGEDCY) are Extracellular-facing. Residues 218-238 (ALAFGVPGLLMVIALVVFAMG) form a helical membrane-spanning segment. The Cytoplasmic segment spans residues 239–295 (SKMYKKPPPEGNIVAQVVKCIWFAISNRFKNRSEDIPKRQHWLDWAAEKYPKQLIMD). A helical membrane pass occupies residues 296–316 (VKTLTRVLFLYIPLPMFWALL). Residues 317-343 (DQQGSRWTLQATKMNGNLGFFVLQPDQ) are Extracellular-facing. The helical transmembrane segment at 344–364 (MQVLNPLLVLIFIPLFDLVIY) threads the bilayer. Topologically, residues 365-380 (RLISKCGINFTSLRKM) are cytoplasmic. A helical membrane pass occupies residues 381–401 (AVGMVLACLAFAAAATVEIKI). The Extracellular segment spans residues 402 to 611 (NEMAPPQPGS…PANKVSIAWQ (210 aa)). The interval 402–611 (NEMAPPQPGS…PANKVSIAWQ (210 aa)) is extracellular domain (ECD). Residues Asn435, Asn472, Asn508, Asn528, and Asn587 are each glycosylated (N-linked (GlcNAc...) asparagine). The helical transmembrane segment at 612 to 632 (LPQYALVTAGEVMFSVTGLEF) threads the bilayer. The Cytoplasmic segment spans residues 633–643 (SYSQAPSSMKS). Residues 644–664 (VLQAAWLLTVAIGNIIVLVVA) form a helical membrane-spanning segment. The Extracellular portion of the chain corresponds to 665–674 (QFSGLVQWAE). Residues 675 to 695 (FVLFSCLLLVVCLIFSIMGYY) traverse the membrane as a helical segment. At 696-729 (YIPIKSEDIQGPEDKQIPHMQGNMINLETKKTKL) the chain is on the cytoplasmic side.

The protein belongs to the major facilitator superfamily. Proton-dependent oligopeptide transporter (POT/PTR) (TC 2.A.17) family. Interacts (via extracellular domain region) with trypsin. In terms of tissue distribution, strongly expressed in kidney. Also detected in brain, lung, liver and heart.

It is found in the apical cell membrane. It localises to the cytoplasmic vesicle. Its subcellular location is the phagosome membrane. The protein localises to the cell membrane. It catalyses the reaction a dipeptide(out) + 2 H(+)(out) = a dipeptide(in) + 2 H(+)(in). The catalysed reaction is N-acetyl-D-muramoyl-L-alanyl-D-isoglutamine(out) + 3 H(+)(out) = N-acetyl-D-muramoyl-L-alanyl-D-isoglutamine(in) + 3 H(+)(in). The enzyme catalyses glycyl-L-leucine(out) + 2 H(+)(out) = glycyl-L-leucine(in) + 2 H(+)(in). It carries out the reaction glycyl-L-lysine(out) + 2 H(+)(out) = glycyl-L-lysine(in) + 2 H(+)(in). It catalyses the reaction glycyl-L-glutamate(out) + 3 H(+)(out) = glycyl-L-glutamate(in) + 3 H(+)(in). The catalysed reaction is L-alanyl-L-alanine(out) + 2 H(+)(out) = L-alanyl-L-alanine(in) + 2 H(+)(in). The enzyme catalyses an L-amino acid tripeptide(out) + 2 H(+)(out) = an L-amino acid tripeptide(in) + 2 H(+)(in). It carries out the reaction carnosine(out) + 2 H(+)(out) = carnosine(in) + 2 H(+)(in). Its function is as follows. Proton-coupled amino-acid transporter that transports oligopeptides of 2 to 4 amino acids with a preference for dipeptides. Transports neutral and anionic dipeptides with a proton to peptide stoichiometry of 2:1 or 3:1. In kidney, involved in the absorption of circulating di- and tripeptides from the glomerular filtrate. Can also transport beta-lactam antibiotics, such as the aminocephalosporin cefadroxil, and other antiviral and anticancer drugs. Transports the dipeptide-like aminopeptidase inhibitor bestatin. Also able to transport carnosine. Involved in innate immunity by promoting the detection of microbial pathogens by NOD-like receptors (NLRs). Mediates transport of bacterial peptidoglycans across the plasma membrane or, in macrophages, the phagosome membrane: catalyzes the transport of certain bacterial peptidoglycans, such as muramyl dipeptide (MDP), the NOD2 ligand. The sequence is that of Solute carrier family 15 member 2 from Oryctolagus cuniculus (Rabbit).